We begin with the raw amino-acid sequence, 72 residues long: Protein kish-A (72 aa).

The N-terminal stretch at 1 to 26 (MSAIFNFQSLLTVILLLICTCAYIRS) is a signal peptide. The Extracellular portion of the chain corresponds to 27–53 (LAPSLLDKNKSGLLGIFWKCARIGERK). Asn-35 carries an N-linked (GlcNAc...) asparagine glycan. A helical transmembrane segment spans residues 54–71 (SPYVAVCCVVMAFSILFM). Position 72 (Gln-72) is a topological domain, cytoplasmic.

Belongs to the KISH family.

The protein localises to the golgi apparatus membrane. In terms of biological role, involved in the early part of the secretory pathway. This is Protein kish-A (TMEM167A) from Taeniopygia guttata (Zebra finch).